Consider the following 79-residue polypeptide: ATP synthase subunit c (79 aa).

2 helical membrane passes run 11–31 (MAAA…IGIL) and 53–73 (FFIV…LGLY).

It belongs to the ATPase C chain family. As to quaternary structure, F-type ATPases have 2 components, F(1) - the catalytic core - and F(0) - the membrane proton channel. F(1) has five subunits: alpha(3), beta(3), gamma(1), delta(1), epsilon(1). F(0) has three main subunits: a(1), b(2) and c(10-14). The alpha and beta chains form an alternating ring which encloses part of the gamma chain. F(1) is attached to F(0) by a central stalk formed by the gamma and epsilon chains, while a peripheral stalk is formed by the delta and b chains.

It is found in the cell inner membrane. Its function is as follows. F(1)F(0) ATP synthase produces ATP from ADP in the presence of a proton or sodium gradient. F-type ATPases consist of two structural domains, F(1) containing the extramembraneous catalytic core and F(0) containing the membrane proton channel, linked together by a central stalk and a peripheral stalk. During catalysis, ATP synthesis in the catalytic domain of F(1) is coupled via a rotary mechanism of the central stalk subunits to proton translocation. Key component of the F(0) channel; it plays a direct role in translocation across the membrane. A homomeric c-ring of between 10-14 subunits forms the central stalk rotor element with the F(1) delta and epsilon subunits. The sequence is that of ATP synthase subunit c from Pectobacterium atrosepticum (strain SCRI 1043 / ATCC BAA-672) (Erwinia carotovora subsp. atroseptica).